The following is a 116-amino-acid chain: Small ribosomal subunit protein uS13 (116 aa).

Residues 92–116 are disordered; that stretch reads RRGLPVRGQNTKNNARTRKGTKRNR. The span at 106 to 116 shows a compositional bias: basic residues; it reads ARTRKGTKRNR.

The protein belongs to the universal ribosomal protein uS13 family. In terms of assembly, part of the 30S ribosomal subunit. Forms a loose heterodimer with protein S19. Forms two bridges to the 50S subunit in the 70S ribosome.

In terms of biological role, located at the top of the head of the 30S subunit, it contacts several helices of the 16S rRNA. In the 70S ribosome it contacts the 23S rRNA (bridge B1a) and protein L5 of the 50S subunit (bridge B1b), connecting the 2 subunits; these bridges are implicated in subunit movement. Contacts the tRNAs in the A and P-sites. This chain is Small ribosomal subunit protein uS13, found in Lactobacillus acidophilus (strain ATCC 700396 / NCK56 / N2 / NCFM).